The chain runs to 336 residues: Probable ADP-ribosylation factor GTPase-activating protein AGD13 (336 aa).

One can recognise an Arf-GAP domain in the interval 15–137 (KRRIRDLLNQ…EFLKPSLRIT (123 aa)). The C4-type zinc-finger motif lies at 30 to 53 (CADCGASDPKWASANIGVFICLKC). The region spanning 162-280 (RTNSSSQTMF…AMAFGDPEMF (119 aa)) is the C2 domain. Ca(2+)-binding residues include aspartate 249, serine 252, and aspartate 255.

The cofactor is Ca(2+).

Its function is as follows. GTPase-activating protein (GAP) for ADP ribosylation factor (ARF). In Arabidopsis thaliana (Mouse-ear cress), this protein is Probable ADP-ribosylation factor GTPase-activating protein AGD13 (AGD13).